We begin with the raw amino-acid sequence, 101 residues long: Replication restart protein PriB (101 aa).

The region spanning 1–101 is the SSB domain; the sequence is MATNHLVLSG…LHAENVELKT (101 aa).

It belongs to the PriB family. As to quaternary structure, homodimer. Interacts with PriA and DnaT. Component of the replication restart primosome. Primosome assembly occurs via a 'hand-off' mechanism. PriA binds to replication forks, subsequently PriB then DnaT bind; DnaT then displaces ssDNA to generate the helicase loading substrate.

Involved in the restart of stalled replication forks, which reloads the replicative helicase on sites other than the origin of replication; the PriA-PriB pathway is the major replication restart pathway. During primosome assembly it facilitates complex formation between PriA and DnaT on DNA; stabilizes PriA on DNA. Stimulates the DNA unwinding activity of PriA helicase. In Shewanella woodyi (strain ATCC 51908 / MS32), this protein is Replication restart protein PriB.